A 671-amino-acid polypeptide reads, in one-letter code: Bifunctional acetylxylan esterase/xylanase XynS20E (671 aa).

The signal sequence occupies residues 1–19 (MRLGVALSTIAVLLTATSA). An acetylxylan esterase region spans residues 54 to 279 (QGAGRDIHVY…IQDIWDFVSQ (226 aa)). The Charge relay system role is filled by Ser152. Asn238 carries an N-linked (GlcNAc...) asparagine glycan. The tract at residues 285–328 (PVSASGNGGGNTTPTNPSTGGNGNGNGGGNTTPTNPSTGGNGNG) is disordered. A compositionally biased stretch (gly residues) spans 304–314 (GGNGNGNGGGN). 2 CBM10 domains span residues 335 to 374 (KCSS…CGCG) and 383 to 422 (TCSA…CGCG). N-linked (GlcNAc...) asparagine glycosylation occurs at Asn339. Residues Asn445 and Asn483 are each glycosylated (N-linked (GlcNAc...) asparagine). Residues 461–661 (TVTSNKVGDI…NNGGTSGTAD (201 aa)) form the GH11 domain. Residue Glu555 is the Nucleophile of the active site. Glu648 functions as the Proton donor in the catalytic mechanism.

It in the N-terminal section; belongs to the axeA family. In the C-terminal section; belongs to the glycosyl hydrolase 11 (cellulase G) family.

The protein resides in the secreted. It carries out the reaction Deacetylation of xylans and xylo-oligosaccharides.. The catalysed reaction is Endohydrolysis of (1-&gt;4)-beta-D-xylosidic linkages in xylans.. Its pathway is glycan degradation; xylan degradation. Its function is as follows. Bifunctional acetylxylan esterase/xylanase involved in the hydrolysis of xylan, a major structural heterogeneous polysaccharide found in plant biomass representing the second most abundant polysaccharide in the biosphere, after cellulose. Degrades xylan from acetylxylan, beechwood, birchwood, and oat spelt, and releases acetate from 4-methylumbelliferyl acetate and beta-D-xylose tetraacetate. No activity is observed against carboxy methyl cellulose, beta-glucan, p-nitrophenol acetate, p-nitrophenol laurate, p-nitrophenol myristate, p-nitrophenol, palmitate, or beta-naphthol acetate. This is Bifunctional acetylxylan esterase/xylanase XynS20E (xynS20E) from Neocallimastix patriciarum (Rumen fungus).